Consider the following 749-residue polypeptide: ATP-dependent RNA helicase rok1 (749 aa).

2 disordered regions span residues 1 to 121 (MDAF…EMDE) and 148 to 182 (NAQT…EQKK). Residues 17–28 (RAAATSAAQTSR) show a composition bias toward low complexity. Residues 44 to 54 (SEADRLLEEKK) show a composition bias toward basic and acidic residues. Residues 69–78 (AGSEDEDAAD) show a composition bias toward acidic residues. Residues 98–110 (RHQEQASADKDGD) are compositionally biased toward basic and acidic residues. Acidic residues predominate over residues 111–120 (SGSEDGSEMD). The span at 167-178 (AQQEEPKTLTKK) shows a compositional bias: basic and acidic residues. Positions 192–224 (VSFKELRTKYKISRRLAENIAEQGFTVPTEVQL) match the Q motif motif. Positions 241 to 457 (KPGETVEPDL…KSTIQERKDL (217 aa)) constitute a Helicase ATP-binding domain. An ATP-binding site is contributed by 254-261 (APTGSGKT). The tract at residues 324 to 366 (VVERDGDGDSDEKDVLDEDSADSGSDSEDDEQTTDKKTKGKAP) is disordered. Acidic residues predominate over residues 331 to 355 (GDSDEKDVLDEDSADSGSDSEDDEQ). The DEAD box motif lies at 404–407 (DEAD). The Helicase C-terminal domain maps to 497 to 665 (GLRQLLHPTA…SVQKWLLDSL (169 aa)). The disordered stretch occupies residues 672-749 (DKKELKKHGV…GDDSWSGLED (78 aa)). 2 stretches are compositionally biased toward basic and acidic residues: residues 690 to 699 (SIKDNKEFRQ) and 707 to 716 (GYERRMENKK). Polar residues predominate over residues 728-737 (SQPQAPSTGA).

This sequence belongs to the DEAD box helicase family. DDX52/ROK1 subfamily. Interacts with the U3 snoRNA and is associated with the 90S and 40S pre-ribosomes.

It localises to the nucleus. Its subcellular location is the nucleolus. The catalysed reaction is ATP + H2O = ADP + phosphate + H(+). Functionally, ATP-dependent RNA helicase involved in 40S ribosomal subunit biogenesis. Required for the processing and cleavage of 35S pre-rRNA at sites A0, A1, and A2, leading to mature 18S rRNA. The chain is ATP-dependent RNA helicase rok1 (rok1) from Aspergillus terreus (strain NIH 2624 / FGSC A1156).